Consider the following 336-residue polypeptide: Neuropeptides B/W receptor type 2 (336 aa).

The interval 1–25 (MMEATGLEGLESTSSPCPGSTGTGL) is disordered. Over 1–45 (MMEATGLEGLESTSSPCPGSTGTGLSWDNGTRHNATFPEPLPALY) the chain is Extracellular. Residues 12 to 25 (STSSPCPGSTGTGL) are compositionally biased toward low complexity. Asn-29 and Asn-34 each carry an N-linked (GlcNAc...) asparagine glycan. Residues 46-68 (VLLPVVYSVICAVGLVGNAAVIC) form a helical membrane-spanning segment. Residues 69 to 80 (VILRAPKMKTVT) lie on the Cytoplasmic side of the membrane. A helical membrane pass occupies residues 81–103 (HVFILNLAIADGLFTLVLPTNIA). At 104–127 (EHLLQRWPFGEVLCKLVLAIDHCN) the chain is on the extracellular side. An intrachain disulfide couples Cys-117 to Cys-197. A helical transmembrane segment spans residues 128-146 (IFSSVYFLAAMSIDRYLVV). Over 147–165 (LATARSRRMPRRTVHRAKV) the chain is Cytoplasmic. Residues 166–188 (ASLCVWLGVTVAVLPFLTFAGVY) traverse the membrane as a helical segment. Residues 189-213 (NNELQVTSCGLSFPRPERAWFQASR) are Extracellular-facing. Residues 214 to 236 (IYTLVLGFVVPMCTLCVLYADLL) traverse the membrane as a helical segment. At 237–256 (RRLRALRLHSGAKALGKAKR) the chain is on the cytoplasmic side. Residues 257–279 (KVSLLVLAVLAVGLLCWTPFHLA) traverse the membrane as a helical segment. Residues 280-293 (SIVALTTDLPQTPL) lie on the Extracellular side of the membrane. The chain crosses the membrane as a helical span at residues 294–316 (VIIVSYVVTSLSYTSSCLNPFLY). Topologically, residues 317–336 (AFLDHSFRKSLRTACRCQGA) are cytoplasmic.

Belongs to the G-protein coupled receptor 1 family.

The protein resides in the cell membrane. Its function is as follows. Interacts specifically with a number of opioid ligands. Receptor for neuropeptides B and W, which may be involved in neuroendocrine system regulation, food intake and the organization of other signals. This Bos taurus (Bovine) protein is Neuropeptides B/W receptor type 2 (NPBWR2).